The chain runs to 847 residues: Glucans biosynthesis glucosyltransferase H (847 aa).

Residues 1–139 (MNKTTEYIDA…WRTVGTIRRY (139 aa)) lie on the Cytoplasmic side of the membrane. A helical membrane pass occupies residues 140–160 (ILLILTLAQTVVATWYMKTIL). The Periplasmic portion of the chain corresponds to 161 to 193 (PYQGWALINPMDMVGQDLWVSFMQLLPYMLQTG). Residues 194–214 (ILILFAVLFCWVSAGFWTALM) traverse the membrane as a helical segment. Topologically, residues 215-512 (GFLQLLIGRD…VKGMHPVHRA (298 aa)) are cytoplasmic. Residues 513 to 533 (VFLTGVMSYLSAPLWFMFLAL) traverse the membrane as a helical segment. At 534-569 (STALQVVHALTEPQYFLQPRQLFPVWPQWRPELAIA) the chain is on the periplasmic side. Residues 570-590 (LFASTMVLLFLPKLLSILLIW) form a helical membrane-spanning segment. The Cytoplasmic segment spans residues 591–602 (CKGTKEYGGFWR). A helical transmembrane segment spans residues 603–625 (VTLSLLLEVLFSVLLAPVRMLFH). Residues 626-679 (TVFVVSAFLGWEVVWNSPQRDDDSTSWGEAFKRHGSQLLLGLVWAVGMAWLDLR) are Periplasmic-facing. A helical membrane pass occupies residues 680-700 (FLFWLAPIVFSLILSPFVSVI). At 701 to 847 (SSRATVGLRT…ALRKPDAASQ (147 aa)) the chain is on the cytoplasmic side.

This sequence belongs to the glycosyltransferase 2 family. OpgH subfamily.

Its subcellular location is the cell inner membrane. The protein operates within glycan metabolism; osmoregulated periplasmic glucan (OPG) biosynthesis. Involved in the biosynthesis of osmoregulated periplasmic glucans (OPGs). This chain is Glucans biosynthesis glucosyltransferase H (mdoH), found in Shigella flexneri.